The following is an 873-amino-acid chain: Coatomer subunit gamma-2 (873 aa).

The span at 1 to 11 shows a compositional bias: basic and acidic residues; that stretch reads MIKKFDKKDEE. The segment at 1–21 is disordered; that stretch reads MIKKFDKKDEESGSGSNPFQN. 6 HEAT repeats span residues 64 to 101, 283 to 320, 321 to 355, 356 to 392, 394 to 430, and 467 to 504; these read TEATEAFFAMTRLFQSNDQTLRRMCYLTIKEMANISED, RELAPAVSVLQLFCSSPKAALRYAAVRTLNKVAMKHPS, AVTACNLDLENLITDSNRSIATLAITTLLKTGSES, SVDRLMKQISSFVSEISDEFKVVVVQAISALCQKYPR, HSAMMNFLSNMLRDDGGFEYKRAIVDCIISIIEENPE, and PQPSKYIRFIFNRVVLESEAVRAAAVSALAKFGAQNDD.

It belongs to the COPG family. Oligomeric complex.

The protein localises to the cytoplasm. It localises to the golgi apparatus membrane. Its subcellular location is the cytoplasmic vesicle. It is found in the COPI-coated vesicle membrane. In terms of biological role, the coatomer is a cytosolic protein complex that binds to dilysine motifs and reversibly associates with Golgi non-clathrin-coated vesicles, which further mediate biosynthetic protein transport from the ER, via the Golgi up to the trans Golgi network. Coatomer complex is required for budding from Golgi membranes, and is essential for the retrograde Golgi-to-ER transport of dilysine-tagged proteins. This chain is Coatomer subunit gamma-2 (copg2), found in Takifugu rubripes (Japanese pufferfish).